A 192-amino-acid chain; its full sequence is Holliday junction branch migration complex subunit RuvA (192 aa).

Positions 1–61 (MFEYLKGIVA…DTGITLYGFL (61 aa)) are domain I. The segment at 62-137 (SLEDKELFLK…KLGDYVKKSA (76 aa)) is domain II. A flexible linker region spans residues 137 to 140 (AVAT). The segment at 141 to 192 (DLTPSLQDALLALVALGYTQKEVDRITPKLAKLPENTADGYIKEALALLLKK) is domain III.

The protein belongs to the RuvA family. In terms of assembly, homotetramer. Forms an RuvA(8)-RuvB(12)-Holliday junction (HJ) complex. HJ DNA is sandwiched between 2 RuvA tetramers; dsDNA enters through RuvA and exits via RuvB. An RuvB hexamer assembles on each DNA strand where it exits the tetramer. Each RuvB hexamer is contacted by two RuvA subunits (via domain III) on 2 adjacent RuvB subunits; this complex drives branch migration. In the full resolvosome a probable DNA-RuvA(4)-RuvB(12)-RuvC(2) complex forms which resolves the HJ.

The protein localises to the cytoplasm. Functionally, the RuvA-RuvB-RuvC complex processes Holliday junction (HJ) DNA during genetic recombination and DNA repair, while the RuvA-RuvB complex plays an important role in the rescue of blocked DNA replication forks via replication fork reversal (RFR). RuvA specifically binds to HJ cruciform DNA, conferring on it an open structure. The RuvB hexamer acts as an ATP-dependent pump, pulling dsDNA into and through the RuvAB complex. HJ branch migration allows RuvC to scan DNA until it finds its consensus sequence, where it cleaves and resolves the cruciform DNA. The chain is Holliday junction branch migration complex subunit RuvA from Lactobacillus gasseri (strain ATCC 33323 / DSM 20243 / BCRC 14619 / CIP 102991 / JCM 1131 / KCTC 3163 / NCIMB 11718 / NCTC 13722 / AM63).